Consider the following 161-residue polypeptide: 6,7-dimethyl-8-ribityllumazine synthase (161 aa).

5-amino-6-(D-ribitylamino)uracil-binding positions include tryptophan 31, 63-65, and 85-87; these read SFE and VVI. (2S)-2-hydroxy-3-oxobutyl phosphate is bound at residue 90–91; the sequence is GT. Histidine 93 serves as the catalytic Proton donor. Phenylalanine 118 serves as a coordination point for 5-amino-6-(D-ribitylamino)uracil. Arginine 132 contacts (2S)-2-hydroxy-3-oxobutyl phosphate.

Belongs to the DMRL synthase family.

The catalysed reaction is (2S)-2-hydroxy-3-oxobutyl phosphate + 5-amino-6-(D-ribitylamino)uracil = 6,7-dimethyl-8-(1-D-ribityl)lumazine + phosphate + 2 H2O + H(+). The protein operates within cofactor biosynthesis; riboflavin biosynthesis; riboflavin from 2-hydroxy-3-oxobutyl phosphate and 5-amino-6-(D-ribitylamino)uracil: step 1/2. Its function is as follows. Catalyzes the formation of 6,7-dimethyl-8-ribityllumazine by condensation of 5-amino-6-(D-ribitylamino)uracil with 3,4-dihydroxy-2-butanone 4-phosphate. This is the penultimate step in the biosynthesis of riboflavin. This Paenarthrobacter aurescens (strain TC1) protein is 6,7-dimethyl-8-ribityllumazine synthase.